A 151-amino-acid polypeptide reads, in one-letter code: Large ribosomal subunit protein uL15 (151 aa).

Residues 1-57 (MTLRLDSLKSNKGARRRKLRKGRGIAAGQGASCGFGMRGQKSRSGRPTRPGFEGGQM) are disordered. Basic residues predominate over residues 12–23 (KGARRRKLRKGR). The span at 25–37 (IAAGQGASCGFGM) shows a compositional bias: gly residues.

The protein belongs to the universal ribosomal protein uL15 family. In terms of assembly, part of the 50S ribosomal subunit.

In terms of biological role, binds to the 23S rRNA. The polypeptide is Large ribosomal subunit protein uL15 (Synechococcus sp. (strain CC9605)).